A 153-amino-acid polypeptide reads, in one-letter code: Ribonuclease K3 (153 aa).

The N-terminal stretch at Met-1–Ala-26 is a signal peptide. Asn-30 carries an N-linked (GlcNAc...) asparagine glycan. Residue His-41 is the Proton acceptor of the active site. Cystine bridges form between Cys-49–Cys-107, Cys-63–Cys-117, Cys-81–Cys-132, and Cys-88–Cys-95. N-linked (GlcNAc...) asparagine glycosylation occurs at Asn-58. Lys-64–Thr-68 lines the substrate pocket. Asn-85 carries N-linked (GlcNAc...) asparagine glycosylation. Lys-89 is a binding site for substrate. His-148 acts as the Proton donor in catalysis.

It belongs to the pancreatic ribonuclease family. In terms of assembly, interacts (via N-terminus) with bacterial lipopolysaccharide (LPS). Kidney.

It is found in the secreted. It localises to the lysosome. The protein localises to the cytoplasmic granule. Its function is as follows. Ribonuclease which shows a preference for the pyrimidines uridine and cytosine. Has potent antibacterial activity against a range of Gram-positive and Gram-negative bacteria, including P.aeruginosa, A.baumanii, M.luteus, S.aureus, E.faecalis, E.faecium, S.saprophyticus and E.coli. Causes loss of bacterial membrane integrity, and also promotes agglutination of Gram-negative bacteria. Probably contributes to urinary tract sterility. Bactericidal activity is independent of RNase activity. The sequence is that of Ribonuclease K3 (RNASE6) from Sus scrofa (Pig).